A 451-amino-acid chain; its full sequence is C4-dicarboxylate transport protein (451 aa).

The next 9 helical transmembrane spans lie at 17-37, 53-73, 85-105, 153-173, 193-213, 231-251, 306-326, 339-359, and 361-381; these read SLYVQVLFAVVVGVLLGHFYP, LIKMIIAPIIFCTVVVGIAGM, LALLYFEIVSSVALVIGLIVV, AFAKGEILQVLLIAVMFGFAL, VLFTIVGYIMKVAPIGAFGAM, LMGSFYLTCLLFVFVVLGLIA, GYSFNLDGTSIYLTMAAVFIA, ITLLLVLLLTSKGAAGITGSG, and IVLAATLSAVGHVPVAGLALI.

It belongs to the dicarboxylate/amino acid:cation symporter (DAACS) (TC 2.A.23) family.

It is found in the cell inner membrane. Functionally, responsible for the transport of dicarboxylates such as succinate, fumarate, and malate from the periplasm across the membrane. The polypeptide is C4-dicarboxylate transport protein (Paracidovorax citrulli (strain AAC00-1) (Acidovorax citrulli)).